We begin with the raw amino-acid sequence, 291 residues long: Probable 2-(5''-triphosphoribosyl)-3'-dephosphocoenzyme-A synthase (291 aa).

It belongs to the CitG/MdcB family.

It catalyses the reaction 3'-dephospho-CoA + ATP = 2'-(5''-triphospho-alpha-D-ribosyl)-3'-dephospho-CoA + adenine. Involved in the formation of 2-(5''-phosphoribosyl)-3'-dephosphocoenzyme-A, the prosthetic group of the acyl-carrier protein of the malonate decarboxylase. The polypeptide is Probable 2-(5''-triphosphoribosyl)-3'-dephosphocoenzyme-A synthase (Pseudomonas syringae pv. syringae (strain B728a)).